Here is a 399-residue protein sequence, read N- to C-terminus: uncharacterized protein (399 aa).

The next 10 membrane-spanning stretches (helical) occupy residues 7–27 (FSAL…LYLI), 33–53 (FLQI…FEVP), 79–99 (AFFP…IWAL), 131–151 (LLIT…SLNI), 153–173 (FPFL…SVFI), 208–228 (VLLI…ISRY), 242–262 (SLGY…TLTI), 296–316 (PLGI…HPIV), 335–355 (LNSG…GIIS), and 357–377 (AFGL…PIIL).

It belongs to the major facilitator superfamily. Drug:H(+) antiporter-3 (DHA3) (TC 2.A.1.21) family.

The protein resides in the cell membrane. This is an uncharacterized protein from Bacillus subtilis (strain 168).